We begin with the raw amino-acid sequence, 57 residues long: uncharacterized protein (57 aa).

The interval 1 to 57 is disordered; the sequence is MANHRGGSGNFAEDRERASEAGKKGGQHSGGNFKNDPQRASEAGKKGGKSSHGKSDN. Basic and acidic residues-rich tracts occupy residues 12–23 and 36–45; these read AEDRERASEAGK and DPQRASEAGK. Positions 46–57 are enriched in basic residues; sequence KGGKSSHGKSDN.

The protein belongs to the con-10 family.

This is an uncharacterized protein from Escherichia coli (strain K12).